The sequence spans 391 residues: Coiled-coil domain-containing protein 85C-A (391 aa).

Coiled coils occupy residues 23 to 87 (KCSK…ELCC) and 121 to 146 (FQQK…KEII). The tract at residues 154 to 212 (NGAGSRSSIDSQSSLSNLNGGSATVRDVGDGSSTSSTGSAGSPDHHHSHIHKPTEGKIT) is disordered. 2 stretches are compositionally biased toward low complexity: residues 158–175 (SRSS…NGGS) and 183–195 (DGSS…SAGS).

The protein belongs to the CCDC85 family.

The protein localises to the cell junction. Its subcellular location is the tight junction. It is found in the adherens junction. Its function is as follows. May play a role in cell-cell adhesion and epithelium development through its interaction with proteins of the beta-catenin family. May play an important role in cortical development, especially in the maintenance of radial glia. This Danio rerio (Zebrafish) protein is Coiled-coil domain-containing protein 85C-A (ccdc85ca).